A 139-amino-acid polypeptide reads, in one-letter code: MKKGTVLNSEISSVISRLGHTDTLVVCDAGLPIPNSTARIDMALTQGVPSFMQVVDVVTREMQVEAAILATEIKQQNPQLHETLLTHLEQLQQHQGNTIKISYTTHEQFKKLTADSQAVIRSGECSPYANVILCAGVTF.

His20 serves as the catalytic Proton donor. Substrate-binding positions include Asp28, His106, and 128–130; that span reads YAN.

This sequence belongs to the RbsD / FucU family. RbsD subfamily. In terms of assembly, homodecamer.

The protein resides in the cytoplasm. The enzyme catalyses beta-D-ribopyranose = beta-D-ribofuranose. Its pathway is carbohydrate metabolism; D-ribose degradation; D-ribose 5-phosphate from beta-D-ribopyranose: step 1/2. Its function is as follows. Catalyzes the interconversion of beta-pyran and beta-furan forms of D-ribose. The polypeptide is D-ribose pyranase (Salmonella choleraesuis (strain SC-B67)).